The chain runs to 156 residues: Small ribosomal subunit protein uS7 (156 aa).

The protein belongs to the universal ribosomal protein uS7 family. As to quaternary structure, part of the 30S ribosomal subunit. Contacts proteins S9 and S11.

One of the primary rRNA binding proteins, it binds directly to 16S rRNA where it nucleates assembly of the head domain of the 30S subunit. Is located at the subunit interface close to the decoding center, probably blocks exit of the E-site tRNA. The sequence is that of Small ribosomal subunit protein uS7 from Shewanella halifaxensis (strain HAW-EB4).